We begin with the raw amino-acid sequence, 285 residues long: CCR4-NOT transcription complex subunit 7 (285 aa).

Aspartate 40, glutamate 42, aspartate 161, aspartate 230, and glutamate 278 together coordinate a divalent metal cation.

It belongs to the CAF1 family. In terms of assembly, component of the CCR4-NOT complex. Mn(2+) is required as a cofactor. Mg(2+) serves as cofactor. It depends on Co(2+) as a cofactor.

It is found in the nucleus. It localises to the cytoplasm. The enzyme catalyses Exonucleolytic cleavage of poly(A) to 5'-AMP.. Functionally, has 3'-5' poly(A) exoribonuclease activity for synthetic poly(A) RNA substrate. Catalytic component of the CCR4-NOT complex which is one of the major cellular mRNA deadenylases and is linked to various cellular processes including bulk mRNA degradation, miRNA-mediated repression, translational repression during translational initiation and general transcription regulation. During miRNA-mediated repression the complex also seems to act as translational repressor during translational initiation. Additional complex functions may be a consequence of its influence on mRNA expression. In Xenopus laevis (African clawed frog), this protein is CCR4-NOT transcription complex subunit 7 (cnot7).